Reading from the N-terminus, the 184-residue chain is uncharacterized protein (184 aa).

An N-terminal signal peptide occupies residues 1 to 20 (MKKQILALVCGVIFSSSTWA).

To E.coli YtfJ.

Its subcellular location is the periplasm. This is an uncharacterized protein from Haemophilus influenzae (strain ATCC 51907 / DSM 11121 / KW20 / Rd).